Reading from the N-terminus, the 192-residue chain is Pyridoxal 5'-phosphate synthase subunit PdxT (192 aa).

47–49 serves as a coordination point for L-glutamine; sequence GES. The active-site Nucleophile is the Cys-78. Residues Arg-105 and 139 to 140 each bind L-glutamine; that span reads IR. Catalysis depends on charge relay system residues His-175 and Glu-177.

Belongs to the glutaminase PdxT/SNO family. In terms of assembly, in the presence of PdxS, forms a dodecamer of heterodimers. Only shows activity in the heterodimer.

The catalysed reaction is aldehydo-D-ribose 5-phosphate + D-glyceraldehyde 3-phosphate + L-glutamine = pyridoxal 5'-phosphate + L-glutamate + phosphate + 3 H2O + H(+). It catalyses the reaction L-glutamine + H2O = L-glutamate + NH4(+). It functions in the pathway cofactor biosynthesis; pyridoxal 5'-phosphate biosynthesis. Its function is as follows. Catalyzes the hydrolysis of glutamine to glutamate and ammonia as part of the biosynthesis of pyridoxal 5'-phosphate. The resulting ammonia molecule is channeled to the active site of PdxS. The sequence is that of Pyridoxal 5'-phosphate synthase subunit PdxT from Solibacter usitatus (strain Ellin6076).